The primary structure comprises 647 residues: DNA topoisomerase 3 (647 aa).

In terms of domain architecture, Toprim spans 2-135 (TRLFIAEKPS…KKETVQRLLI (134 aa)). Mg(2+) is bound by residues Glu8, Asp104, and Asp106. One can recognise a Topo IA-type catalytic domain in the interval 156-608 (FIPLSVSALA…TLQGRLEQLI (453 aa)). The interval 195 to 200 (SVGRVQ) is interaction with DNA. The active-site O-(5'-phospho-DNA)-tyrosine intermediate is Tyr332.

The protein belongs to the type IA topoisomerase family. It depends on Mg(2+) as a cofactor.

The catalysed reaction is ATP-independent breakage of single-stranded DNA, followed by passage and rejoining.. Its function is as follows. Releases the supercoiling and torsional tension of DNA, which is introduced during the DNA replication and transcription, by transiently cleaving and rejoining one strand of the DNA duplex. Introduces a single-strand break via transesterification at a target site in duplex DNA. The scissile phosphodiester is attacked by the catalytic tyrosine of the enzyme, resulting in the formation of a DNA-(5'-phosphotyrosyl)-enzyme intermediate and the expulsion of a 3'-OH DNA strand. The free DNA strand then undergoes passage around the unbroken strand, thus removing DNA supercoils. Finally, in the religation step, the DNA 3'-OH attacks the covalent intermediate to expel the active-site tyrosine and restore the DNA phosphodiester backbone. In Vibrio cholerae serotype O1 (strain ATCC 39315 / El Tor Inaba N16961), this protein is DNA topoisomerase 3.